Consider the following 138-residue polypeptide: Cysteine desulfuration protein SufE (138 aa).

The Cysteine persulfide intermediate role is filled by Cys51.

The protein belongs to the SufE family. Homodimer. Interacts with SufS.

The protein localises to the cytoplasm. The protein operates within cofactor biosynthesis; iron-sulfur cluster biosynthesis. Its function is as follows. Participates in cysteine desulfuration mediated by SufS. Cysteine desulfuration mobilizes sulfur from L-cysteine to yield L-alanine and constitutes an essential step in sulfur metabolism for biosynthesis of a variety of sulfur-containing biomolecules. Functions as a sulfur acceptor for SufS, by mediating the direct transfer of the sulfur atom from the S-sulfanylcysteine of SufS, an intermediate product of cysteine desulfuration process. The polypeptide is Cysteine desulfuration protein SufE (Salmonella arizonae (strain ATCC BAA-731 / CDC346-86 / RSK2980)).